We begin with the raw amino-acid sequence, 236 residues long: Small ribosomal subunit protein uS2c (236 aa).

Belongs to the universal ribosomal protein uS2 family.

It is found in the plastid. It localises to the chloroplast. This chain is Small ribosomal subunit protein uS2c (rps2), found in Amborella trichopoda.